Here is a 235-residue protein sequence, read N- to C-terminus: Sugar fermentation stimulation protein homolog (235 aa).

The protein belongs to the SfsA family.

In Ectopseudomonas mendocina (strain ymp) (Pseudomonas mendocina), this protein is Sugar fermentation stimulation protein homolog.